Consider the following 222-residue polypeptide: Type II restriction enzyme MjaI (222 aa).

The enzyme catalyses Endonucleolytic cleavage of DNA to give specific double-stranded fragments with terminal 5'-phosphates.. A P subtype restriction enzyme that recognizes the double-stranded sequence 5'-CTAG-3'; the cleavage site is unknown. This is Type II restriction enzyme MjaI (mjaIR) from Methanocaldococcus jannaschii (strain ATCC 43067 / DSM 2661 / JAL-1 / JCM 10045 / NBRC 100440) (Methanococcus jannaschii).